Here is a 1627-residue protein sequence, read N- to C-terminus: Adhesin P1 (1627 aa).

Residues 1 to 59 (MHQTKKTALSKSTWILILTATASLATGLTVVGHFTSTTTTLKRQQFSYTRPDEVALRHT) form the signal peptide. 4 disordered regions span residues 219–238 (LPQQ…AMFG), 252–355 (NEKL…PWRP), 898–953 (WRND…TTQD), and 1274–1362 (SFGT…TGND). Residues 224–234 (TESGQNTSTTG) show a composition bias toward polar residues. The span at 261 to 276 (TGSSTTSGSGQSTQRG) shows a compositional bias: low complexity. Basic and acidic residues predominate over residues 282–297 (TKVKALKIEVKKKSDS). Polar residues-rich tracts occupy residues 903 to 933 (ASSG…SAGN), 939 to 953 (QDNI…TTQD), and 1274 to 1297 (SFGT…VFGT). Over residues 1307–1320 (SGGGAGGGSSGSGQ) the composition is skewed to gly residues. Positions 1341–1352 (STSDGNTSSTNN) are enriched in low complexity. Positions 1403 to 1415 (GPQSVKFKSPDQI) are cytadherence epitope. Residues 1527–1547 (AITVPIVVIVLSVTLGLAIGI) traverse the membrane as a helical segment. The interval 1589-1627 (QAPKRLKQTSAAKPGAPRPPVPPKPGAPKPPVQPPKKPA) is disordered. Residues 1604–1627 (APRPPVPPKPGAPKPPVQPPKKPA) are compositionally biased toward pro residues.

It belongs to the adhesin P1 family.

It localises to the cell membrane. The protein resides in the cell projection. It is found in the attachment organelle. Its subcellular location is the cell surface. The protein is the major adhesin mediating the attachment of this mycoplasma to respiratory epithelium. This chain is Adhesin P1 (mgpA), found in Mycoplasma pneumoniae (strain ATCC 29342 / M129 / Subtype 1) (Mycoplasmoides pneumoniae).